A 732-amino-acid chain; its full sequence is MFIKKEIDLGQGKVITIETGKMAKQADGSAVVRLNDTMVLATVVSSKTPPPPSQDFFPLQVEYREKYSAAGKFPGGFFKREGRPSEKEILSARLIDRALRPLFPDGYYQETQIIISVISSDTINDADVLGGIAASAAIMVSDIPFANPMSEVRVGRINGQFIVNPDTEELQRSDLDICIGGTEDTICMLEGEMKEISEAEMLDAIKFGHEAIKKLCAFQKELAAEVAKPKRAFAPTVAPAELVAFIEANCAAELKALAYTPLAKEERSDRTKAIYKETIAKTLEHFSSITAEEIAANPEKALCQSEHMIDECIHDVEKKVMRHMILDDSKRLDGRTLEQVRPISIELGLIPRAHGSALFTRGETQALVTLTLGTKKDAQSVDTLTDDKDKRFMLHYNFPPFSVGETGRVGGTGRREIGHGNLAERAIKMVMPAEQEFPYTVRLVSDILESNGSSSMASVCGGTLAAMDGGIPLKKPVSGIAMGLIKEGDRYAVLSDILGNEDHLGDMDFKVSGTRDGITACQMDIKIDGLDYHILETALEQARKGRLHILDVMTEAIPESREDIGKYAPRLTSIQIPVDAIGMVIGKGGETIRSITEETGAEINIDDDGTVTIACSSPEGTKAAVETIKTLVSKPEVGTIYMGKVRDIRDELGAFVEFLPKTDGLVHISEIARERIAKVSDVLKPGERVKVKLIDIRKDPRTGKTKFALSIKALLDTDQPAETNGEAKPARD.

Mg(2+) contacts are provided by aspartate 502 and aspartate 508. In terms of domain architecture, KH spans 569 to 628 (PRLTSIQIPVDAIGMVIGKGGETIRSITEETGAEINIDDDGTVTIACSSPEGTKAAVETI). The S1 motif domain maps to 638–712 (GTIYMGKVRD…GKTKFALSIK (75 aa)).

Belongs to the polyribonucleotide nucleotidyltransferase family. Mg(2+) is required as a cofactor.

The protein resides in the cytoplasm. The catalysed reaction is RNA(n+1) + phosphate = RNA(n) + a ribonucleoside 5'-diphosphate. Involved in mRNA degradation. Catalyzes the phosphorolysis of single-stranded polyribonucleotides processively in the 3'- to 5'-direction. This Chlorobaculum parvum (strain DSM 263 / NCIMB 8327) (Chlorobium vibrioforme subsp. thiosulfatophilum) protein is Polyribonucleotide nucleotidyltransferase.